The sequence spans 617 residues: DNA-(apurinic or apyrimidinic site) endonuclease (617 aa).

Residues 74–99 (IKNSDEQNNSNNNNNNSSSSNFCSNN) are disordered. Residues 81–99 (NNSNNNNNNSSSSNFCSNN) show a composition bias toward low complexity. Asn284 and Glu317 together coordinate Mg(2+). The segment at 326-349 (SEPCDNKNKNKNKNDGIRDRGKIK) is disordered. The span at 329–349 (CDNKNKNKNKNDGIRDRGKIK) shows a compositional bias: basic and acidic residues. Residues Asp474, Asn476, Asp606, and His607 each contribute to the Mg(2+) site. Residue His607 is the Proton acceptor of the active site.

Belongs to the DNA repair enzymes AP/ExoA family. Requires Mg(2+) as cofactor. Mn(2+) is required as a cofactor. In terms of processing, may be proteolytically cleaved into a 64 kDa form.

The protein resides in the mitochondrion. The catalysed reaction is Exonucleolytic cleavage in the 3'- to 5'-direction to yield nucleoside 5'-phosphates.. Apurinic/apyrimidinic (AP) endonuclease activity is maximal at low Mg(2+) (0.5-2 mM) with no activity seen at high concentrations (more than 10 mM). 3'-5' exonuclease activity is maximal in the range of 0.5-2 mM Mg(2+) with activity seen up to 10 mM Mg(2+). Functionally, multifunctional protein that plays a central role in mitochondrial DNA base excision repair (BER) pathway induced by oxidative stress. Has apurinic/apyrimidinic (AP) endonuclease activity towards double-stranded DNA (dsDNA). Has nucleotide incision repair (NIR) activity; acts on dsDNA with oxidized bases thymine glycol and 5,6-dihydro-2'-deoxyuridine. Has 3'-5' exonuclease; can use dsDNA templates with 3'-OH termini including blunt-end, gapped and mismatched 3'-recessed. Has 3'-phosphatase activity; cleaves 3'-phosphate from blunt, recessed and gapped dsDNA templates, followed by 3'-5' exonuclease activity. Has RNase H-like activity; cleaves RNA on 3'-recessed RNA-DNA duplex. Plays a role in merosome infection of host erythrocytes. In Plasmodium falciparum (isolate 3D7), this protein is DNA-(apurinic or apyrimidinic site) endonuclease.